The chain runs to 764 residues: Phosphoribosylformylglycinamidine synthase subunit PurL (764 aa).

Histidine 57 is a catalytic residue. ATP contacts are provided by tyrosine 60 and lysine 104. Glutamate 106 is a Mg(2+) binding site. Residues 107–110 (SHNH) and arginine 129 contribute to the substrate site. Histidine 108 acts as the Proton acceptor in catalysis. Aspartate 130 lines the Mg(2+) pocket. Glutamine 258 contributes to the substrate binding site. Aspartate 286 serves as a coordination point for Mg(2+). 330-332 (ESQ) contributes to the substrate binding site. Residues asparagine 518 and glycine 555 each contribute to the ATP site. Asparagine 556 is a binding site for Mg(2+). Substrate is bound at residue serine 558.

It belongs to the FGAMS family. In terms of assembly, monomer. Part of the FGAM synthase complex composed of 1 PurL, 1 PurQ and 2 PurS subunits.

It is found in the cytoplasm. The enzyme catalyses N(2)-formyl-N(1)-(5-phospho-beta-D-ribosyl)glycinamide + L-glutamine + ATP + H2O = 2-formamido-N(1)-(5-O-phospho-beta-D-ribosyl)acetamidine + L-glutamate + ADP + phosphate + H(+). The protein operates within purine metabolism; IMP biosynthesis via de novo pathway; 5-amino-1-(5-phospho-D-ribosyl)imidazole from N(2)-formyl-N(1)-(5-phospho-D-ribosyl)glycinamide: step 1/2. Part of the phosphoribosylformylglycinamidine synthase complex involved in the purines biosynthetic pathway. Catalyzes the ATP-dependent conversion of formylglycinamide ribonucleotide (FGAR) and glutamine to yield formylglycinamidine ribonucleotide (FGAM) and glutamate. The FGAM synthase complex is composed of three subunits. PurQ produces an ammonia molecule by converting glutamine to glutamate. PurL transfers the ammonia molecule to FGAR to form FGAM in an ATP-dependent manner. PurS interacts with PurQ and PurL and is thought to assist in the transfer of the ammonia molecule from PurQ to PurL. In Nocardia farcinica (strain IFM 10152), this protein is Phosphoribosylformylglycinamidine synthase subunit PurL.